The following is a 571-amino-acid chain: OTU domain-containing protein 5 (571 aa).

2 disordered regions span residues 1 to 111 and 146 to 175; these read MTIL…GPGG and PGHSKRRRQAPGVGAVGGGSPEREEVGAGY. Over residues 11–30 the composition is skewed to pro residues; that stretch reads PPDADPANEPPPPGPMPPAP. Over residues 32–47 the composition is skewed to gly residues; the sequence is RGGGVGVGGGGTGVGG. The segment covering 63–75 has biased composition (pro residues); that stretch reads ASPPPQGPLPGPP. Serine 64 carries the phosphoserine modification. The span at 84–97 shows a compositional bias: low complexity; it reads AVPPGAVAGPRPQQ. Position 165 is a phosphoserine (serine 165). Phosphotyrosine is present on tyrosine 175. Serine 177 bears the Phosphoserine mark. Threonine 195 is modified (phosphothreonine). Residues 213–341 enclose the OTU domain; that stretch reads FIIKQMKEDG…NIHYNSVVNP (129 aa). A cys-loop region spans residues 218–224; that stretch reads MKEDGAC. Aspartate 221 is a catalytic residue. Residue cysteine 224 is the Nucleophile of the active site. The segment at 273-283 is variable-loop; the sequence is KRKNNCHGNHI. The residue at position 328 (serine 328) is a Phosphoserine; by MTOR. The tract at residues 329 to 334 is his-loop; sequence YHRNIH. Histidine 334 is an active-site residue. A phosphoserine mark is found at serine 337 and serine 375. Residues 418–502 form a disordered region; that stretch reads ARQVRGPSQP…PGTSSQFSAG (85 aa). 2 stretches are compositionally biased toward low complexity: residues 430 to 443 and 450 to 462; these read ASATCSSATAAASS and SRSPRQRSSASSP. Serine 452 is modified (phosphoserine). Position 507 is a phosphothreonine (threonine 507). Serine 508 carries the post-translational modification Phosphoserine; by MTOR.

This sequence belongs to the peptidase C85 family. As to quaternary structure, interacts with TRAF3. In terms of processing, phosphorylation at Ser-177 is required for deubiquitinating activity. Phosphorylation at Ser-328, Ser-337 and Ser-508 by MTOR promotes its activity. In terms of tissue distribution, expressed in various tissues, including the liver and placenta, as well as in peripheral blood leukocytes.

It is found in the nucleus. The enzyme catalyses Thiol-dependent hydrolysis of ester, thioester, amide, peptide and isopeptide bonds formed by the C-terminal Gly of ubiquitin (a 76-residue protein attached to proteins as an intracellular targeting signal).. With respect to regulation, inhibited by N-ethyl-maleimide (NEM). Functionally, deubiquitinating enzyme that functions as a negative regulator of the innate immune system. Has peptidase activity towards 'Lys-48'- and 'Lys-63'-linked polyubiquitin chains. Can also cleave 'Lys-11'-linked ubiquitin chains (in vitro). Acts via TRAF3 deubiquitination and subsequent suppression of type I interferon (IFN) production. Controls neuroectodermal differentiation through cleaving 'Lys-48'-linked ubiquitin chains to counteract degradation of select chromatin regulators such as ARID1A, HDAC2 and HCF1. Acts as a positive regulator of mTORC1 and mTORC2 signaling following phosphorylation by MTOR: acts by mediating deubiquitination of BTRC, leading to its stability. The protein is OTU domain-containing protein 5 of Homo sapiens (Human).